The primary structure comprises 500 residues: uncharacterized protein (500 aa).

The signal sequence occupies residues 1–20 (MHSIIFKAAVALLGVSTAAG). The N-linked (GlcNAc...) asparagine glycan is linked to Asn43. Positions 60–232 (TALRPDCIIA…TAFTVKTHTQ (173 aa)) constitute an FAD-binding PCMH-type domain. His98 bears the Pros-8alpha-FAD histidine mark. Asn194, Asn201, Asn246, Asn299, and Asn414 each carry an N-linked (GlcNAc...) asparagine glycan.

This sequence belongs to the oxygen-dependent FAD-linked oxidoreductase family. FAD serves as cofactor.

Its subcellular location is the secreted. This is an uncharacterized protein from Arthroderma benhamiae (strain ATCC MYA-4681 / CBS 112371) (Trichophyton mentagrophytes).